We begin with the raw amino-acid sequence, 604 residues long: Siderophore iron transporter mirB (604 aa).

The disordered stretch occupies residues 1–61; that stretch reads MTIGSKFSLL…DNSSDEALPS (61 aa). The next 14 helical transmembrane spans lie at 73 to 95, 115 to 137, 149 to 168, 178 to 200, 207 to 224, 237 to 259, 289 to 311, 326 to 343, 363 to 385, 400 to 422, 427 to 449, 454 to 476, 489 to 511, and 566 to 588; these read AVTL…LVTL, FQSH…ALYI, AEGW…MMAA, ADVF…AADI, GIAF…AFAG, WRWG…YFVL, YFFA…FLLP, YIIA…LFVL, TVLG…NSYF, AGYV…GFAI, YFRW…MIHF, QYIG…FVLL, YVAA…GNAI, and AQAR…MFMV.

This sequence belongs to the major facilitator superfamily.

It is found in the membrane. Involved in the transport of siderophore triacestylfusarinine C and so has a role in iron homeostasis. In Emericella nidulans (strain FGSC A4 / ATCC 38163 / CBS 112.46 / NRRL 194 / M139) (Aspergillus nidulans), this protein is Siderophore iron transporter mirB (mirB).